Reading from the N-terminus, the 618-residue chain is DnaJ homolog subfamily C member 2 (618 aa).

The J domain occupies 85 to 158 (DHYAVLGLAH…VKRRAFDSVD (74 aa)). Disordered regions lie at residues 281–315 (KEEE…QQEE), 330–349 (QAAQ…IKKE), and 419–448 (LQKE…QNNR). Over residues 428–448 (QAQQAARGSEHSSAAGGQNNR) the composition is skewed to polar residues. SANT domains follow at residues 445–507 (QNNR…KLDP) and 548–603 (SNAA…EMIK).

Component of ribosome-associated complex (RAC).

The protein resides in the nucleus. The protein localises to the cytoplasm. Its subcellular location is the cytosol. In terms of biological role, acts both as a chaperone in the cytosol and as a chromatin regulator in the nucleus. When cytosolic, acts as a molecular chaperone: component of the ribosome-associated complex (RAC), a complex involved in folding or maintaining nascent polypeptides in a folding-competent state. When nuclear, mediates the switching from polycomb-repressed genes to an active state: specifically recruited at histone H2A ubiquitinated at 'Lys-119' (H2AK119ub), and promotes the displacement of the polycomb PRC1 complex from chromatin, thereby facilitating transcription activation. This is DnaJ homolog subfamily C member 2 (dnajc2) from Danio rerio (Zebrafish).